The following is a 156-amino-acid chain: Ribosomal RNA large subunit methyltransferase H (156 aa).

S-adenosyl-L-methionine-binding positions include L73, G104, and 123-128 (VSSLTL).

Belongs to the RNA methyltransferase RlmH family. Homodimer.

The protein resides in the cytoplasm. It catalyses the reaction pseudouridine(1915) in 23S rRNA + S-adenosyl-L-methionine = N(3)-methylpseudouridine(1915) in 23S rRNA + S-adenosyl-L-homocysteine + H(+). Functionally, specifically methylates the pseudouridine at position 1915 (m3Psi1915) in 23S rRNA. The chain is Ribosomal RNA large subunit methyltransferase H from Burkholderia thailandensis (strain ATCC 700388 / DSM 13276 / CCUG 48851 / CIP 106301 / E264).